Here is a 152-residue protein sequence, read N- to C-terminus: MALTERQEALLKQSWEVLKQNIPGHSLRLFALIIEAAPESKYVFSFLKDSNEIPENNPKLKAHAAVIFKTICESATELRQKGQAVWDNNTLKRLGSIHLKNKITDPHFEVMKGALLGTIKEAVKENWSDEMGCAWTEAYNQLVATIKAEMKE.

Positions 2–151 (ALTERQEALL…LVATIKAEMK (150 aa)) constitute a Globin domain. Residues 35–39 (EAAPE) carry the Homodimerization motif. Heme b contacts are provided by S45, K59, H63, R93, and H98. Positions 105-117 (DPHFEVMKGALLG) match the Homodimerization motif.

It belongs to the plant globin family. As to quaternary structure, homodimer. Heme b is required as a cofactor. As to expression, root nodules.

It is found in the cytoplasm. Its subcellular location is the nucleus. It catalyses the reaction Fe(III)-heme b-[protein] + nitric oxide + H2O = Fe(II)-heme b-[protein] + nitrite + 2 H(+). Phytoglobin that reduces nitrite to nitric oxide (NO) under anoxic conditions (e.g. during flooding or in waterlogged soil) and upon root nodulation. Required for general plant development and during nodulation, especially for the onset of symbiosis. Monitors nitric oxide (NO) levels during early phase of the nitrogen-fixing symbiosis and buffers oxygen in functioning nodules. May not function as an oxygen storage or transport protein. Has an unusually high affinity for O(2) through a hexacoordinate heme iron because of a very low dissociation constant. The polypeptide is Anaerobic nitrite reductase SYMA (Casuarina glauca (Swamp oak)).